We begin with the raw amino-acid sequence, 418 residues long: D-amino acid dehydrogenase (418 aa).

3–17 is an FAD binding site; it reads VLVLGAGVVGTTSAW.

It belongs to the DadA oxidoreductase family. FAD is required as a cofactor.

The catalysed reaction is a D-alpha-amino acid + A + H2O = a 2-oxocarboxylate + AH2 + NH4(+). It participates in amino-acid degradation; D-alanine degradation; NH(3) and pyruvate from D-alanine: step 1/1. Oxidative deamination of D-amino acids. In Dechloromonas aromatica (strain RCB), this protein is D-amino acid dehydrogenase.